Here is a 228-residue protein sequence, read N- to C-terminus: Probable septum site-determining protein MinC (228 aa).

This sequence belongs to the MinC family. In terms of assembly, interacts with MinD and FtsZ.

Cell division inhibitor that blocks the formation of polar Z ring septums. Rapidly oscillates between the poles of the cell to destabilize FtsZ filaments that have formed before they mature into polar Z rings. Prevents FtsZ polymerization. This chain is Probable septum site-determining protein MinC, found in Bacillus cereus (strain B4264).